Consider the following 1065-residue polypeptide: Pumilio domain-containing protein P35G2.14 (1065 aa).

Disordered regions lie at residues 1-78 (MHQD…SLRS), 130-265 (ITSK…PWSP), and 422-573 (TTGF…NTNS). The span at 16-44 (RNTISKPSNNNPPLDMSSLNNDFGQQLDS) shows a compositional bias: polar residues. The segment covering 59 to 77 (NPSSNFNDSNRSNISSSLR) has biased composition (low complexity). Composition is skewed to polar residues over residues 134 to 151 (LQNNSNLSVTSSANRGRT) and 169 to 189 (SSVSSGKQHLSSLSLHTHFNP). Low complexity-rich tracts occupy residues 190–224 (SSSSTVSSDSLESSQQKAPSSSSTATPASAASEII) and 236–246 (SASNAANSGSN). Polar residues-rich tracts occupy residues 247 to 262 (TIRARQTTRTRSNTLP) and 434 to 455 (GLNTSLFNTSSGGSLKSPTFEV). T260 is subject to Phosphothreonine. Positions 470-483 (PLGSLSSRPKPSSS) are enriched in low complexity. Polar residues-rich tracts occupy residues 495–522 (LKTSNPYMPSPSLLSGSLANSSEHSSSP) and 529–551 (IHNQPVSSSKSTASLNTNNNGLR). 3 positions are modified to phosphoserine: S506, S511, and S515. Position 554 is a phosphothreonine (T554). Positions 559–573 (NISTRSSSESNNTNS) are enriched in low complexity. One can recognise an RRM domain in the interval 592 to 666 (HALWVGNLPS…DPVCISFAKV (75 aa)). Residues 712 to 1065 (DLSKIYQILN…ELKKLAEVCA (354 aa)) enclose the PUM-HD domain. Pumilio repeat units lie at residues 771-808 (AINWLDEVSDLSSDHLGNTVVQKLFDYCSDPVKEMMLE), 809-844 (RIAPHLAQIGIHKNGTWAAQKIVDVASTEAQMRLIA), 846-884 (HLQPYIPLLFADQFGNYVVQTCLKFGAPMNDFVFEAILN), 886-917 (FWVIAQSRYGSRAVRACLESPDVTEEQRVLVA), 919-954 (AITVYSVHLAMNGNGTLLLTYLVENMNYPHIPILLT), and 956-993 (RFVQDIVRVCTHRLAYNSLLKIISISQGDTACGDLVVD).

The protein localises to the cytoplasm. This is Pumilio domain-containing protein P35G2.14 from Schizosaccharomyces pombe (strain 972 / ATCC 24843) (Fission yeast).